Here is a 273-residue protein sequence, read N- to C-terminus: Dermonecrotic toxin LvSicTox-alphaIC1ai (273 aa).

H5 is a catalytic residue. Mg(2+) is bound by residues E25 and D27. H41 serves as the catalytic Nucleophile. 2 disulfide bridges follow: C45–C51 and C47–C190. D85 contributes to the Mg(2+) binding site.

Belongs to the arthropod phospholipase D family. Class II subfamily. Mg(2+) serves as cofactor. In terms of tissue distribution, expressed by the venom gland.

Its subcellular location is the secreted. The enzyme catalyses an N-(acyl)-sphingosylphosphocholine = an N-(acyl)-sphingosyl-1,3-cyclic phosphate + choline. The catalysed reaction is an N-(acyl)-sphingosylphosphoethanolamine = an N-(acyl)-sphingosyl-1,3-cyclic phosphate + ethanolamine. It catalyses the reaction a 1-acyl-sn-glycero-3-phosphocholine = a 1-acyl-sn-glycero-2,3-cyclic phosphate + choline. It carries out the reaction a 1-acyl-sn-glycero-3-phosphoethanolamine = a 1-acyl-sn-glycero-2,3-cyclic phosphate + ethanolamine. Functionally, dermonecrotic toxins cleave the phosphodiester linkage between the phosphate and headgroup of certain phospholipids (sphingolipid and lysolipid substrates), forming an alcohol (often choline) and a cyclic phosphate. This toxin acts on sphingomyelin (SM). It may also act on ceramide phosphoethanolamine (CPE), lysophosphatidylcholine (LPC) and lysophosphatidylethanolamine (LPE), but not on lysophosphatidylserine (LPS), and lysophosphatidylglycerol (LPG). It acts by transphosphatidylation, releasing exclusively cyclic phosphate products as second products. Induces dermonecrosis, hemolysis, increased vascular permeability, edema, inflammatory response, and platelet aggregation. In Loxosceles variegata (Recluse spider), this protein is Dermonecrotic toxin LvSicTox-alphaIC1ai.